The sequence spans 192 residues: MMRYYIYVQYWKRFLRLVRSFHWATSNVLLFKSDFGDTFKMRDYNLYEMLSARNGSGGTYFHEACQANSIALLWRAAGMLDESHPRILNIRDYKGAQCTHIIATSNVSCSIDMMNIVLQLGADINGQEGLAGLTPLHICVNKKNYALAEWLCQAPGIDVKVENFGKETPYDLACKMEDRKMMKIFEERSKKM.

ANK repeat units follow at residues 94–126, 131–161, and 165–192; these read KGAQ…DING, AGLT…DVKV, and GKET…SKKM.

It belongs to the polydnaviridae I-Kappa-B-like protein family.

Suppresses the host immune response through NF-kappa-B inactivation. Possesses ankyrin repeat domains required for NF-kappa-B binding but lacks the regulatory regions required for dissociation from NF-kappa-B and degradation. Therefore, prevents host NF-kappa-B release and subsequent activation. The polypeptide is I-Kappa-B like protein H1 (H4) (Microplitis demolitor bracovirus (isolate Webb) (MdBV)).